The primary structure comprises 403 residues: MSKFNRIHLVVLDSVGIGAAPDADKFFNAGVADTDSDTLGHISETAGLSVPNMAKIGLGNISRPIPLKTIPTEDNPTGYVTKLEEVSLGKDTMTGHWEIMGLNITEPFDTFWNGFPEEILTKIEEFSGRKIIREANKPYSGTAVIDDFGPRQMETGELIVYTSADPVLQIAAHEDIIPVEELYKICEYARSITLERPALLGRIIARPYVGEPGNFTRTANRHDYAVSPFQDTVLNKLADAGVPTYAVGKINDIFNGSGITNDMGHNKSNSHGIDTLIKTLQLPEFTKGFSFTNLVDFDANFGHRRDPEGYRDCLHEFDNRLPEIIANMKEDDLLLITADHGNDPTYAGTDHTREYIPLLAYSASFTGNGLIPQGHFADISATVAENFGVDTAMIGESFLGHLK.

6 residues coordinate Mn(2+): Asp-13, Asp-298, His-303, Asp-339, His-340, and His-351.

Belongs to the phosphopentomutase family. It depends on Mn(2+) as a cofactor.

The protein resides in the cytoplasm. The enzyme catalyses 2-deoxy-alpha-D-ribose 1-phosphate = 2-deoxy-D-ribose 5-phosphate. It catalyses the reaction alpha-D-ribose 1-phosphate = D-ribose 5-phosphate. It functions in the pathway carbohydrate degradation; 2-deoxy-D-ribose 1-phosphate degradation; D-glyceraldehyde 3-phosphate and acetaldehyde from 2-deoxy-alpha-D-ribose 1-phosphate: step 1/2. In terms of biological role, isomerase that catalyzes the conversion of deoxy-ribose 1-phosphate (dRib-1-P) and ribose 1-phosphate (Rib-1-P) to deoxy-ribose 5-phosphate (dRib-5-P) and ribose 5-phosphate (Rib-5-P), respectively. In Streptococcus pyogenes serotype M4 (strain MGAS10750), this protein is Phosphopentomutase.